The sequence spans 1202 residues: DNA polymerase beta (1202 aa).

3 tandem repeats follow at residues 1071–1074 (AGNP), 1075–1078 (AGNP), and 1079–1082 (AGNA). The segment at 1071 to 1082 (AGNPAGNPAGNA) is 3 X 4 AA tandem repeats of A-G-[NK]-[PA].

Belongs to the DNA polymerase type-B family.

It carries out the reaction DNA(n) + a 2'-deoxyribonucleoside 5'-triphosphate = DNA(n+1) + diphosphate. DNA-directed DNA polymerase involved in viral DNA replication. The polypeptide is DNA polymerase beta (DPOL) (Ornithodoros (relapsing fever ticks)).